Here is a 300-residue protein sequence, read N- to C-terminus: SNAP25 homologous protein SNAP33 (300 aa).

Disordered stretches follow at residues 1 to 76 (MFGL…QSLF) and 176 to 228 (WKPK…PESA). At Ser-29 the chain carries Phosphoserine. Positions 38-49 (TLNPSKRTTSEP) are enriched in polar residues. Residues 190–208 (TRDDSPTRRVNHLEKREKL) are compositionally biased toward basic and acidic residues. The 63-residue stretch at 235–297 (EMEKAKQDDG…QQSNQRGRRL (63 aa)) folds into the t-SNARE coiled-coil homology domain.

This sequence belongs to the SNAP-25 family. As to quaternary structure, interacts with the cytokinesis-specific syntaxin KNOLLE and with SYP121. Binds to EXO70B2. As to expression, ubiquitous, with a strong expression in root tips, ovules, very young leaves, vascular tissue, hydathodes, stipules and the abscission and dehiscence zones of the siliques.

It localises to the membrane. Functionally, t-SNARE involved in diverse vesicle trafficking and membrane fusion processes, including cell plate formation. May function in the secretory pathway. The sequence is that of SNAP25 homologous protein SNAP33 from Arabidopsis thaliana (Mouse-ear cress).